The sequence spans 107 residues: IQ domain-containing protein F6 (107 aa).

One can recognise an IQ domain in the interval 42–71; sequence QEWAVVKVQAQVRMWQARRRFLQARQAACI.

The sequence is that of IQ domain-containing protein F6 (IQCF6) from Homo sapiens (Human).